A 214-amino-acid chain; its full sequence is Urease accessory protein UreF (214 aa).

Residues 70–95 (AAAGEAGDAETDARTPSPAARAASRA) form a disordered region. Residues 83–95 (RTPSPAARAASRA) are compositionally biased toward low complexity.

The protein belongs to the UreF family. UreD, UreF and UreG form a complex that acts as a GTP-hydrolysis-dependent molecular chaperone, activating the urease apoprotein by helping to assemble the nickel containing metallocenter of UreC. The UreE protein probably delivers the nickel.

It is found in the cytoplasm. Functionally, required for maturation of urease via the functional incorporation of the urease nickel metallocenter. In Mycolicibacterium vanbaalenii (strain DSM 7251 / JCM 13017 / BCRC 16820 / KCTC 9966 / NRRL B-24157 / PYR-1) (Mycobacterium vanbaalenii), this protein is Urease accessory protein UreF.